A 101-amino-acid chain; its full sequence is Phosphoribosyl-AMP cyclohydrolase (101 aa).

Asp-71 contacts Mg(2+). Cys-72 contacts Zn(2+). Mg(2+) contacts are provided by Asp-73 and Asp-75. Zn(2+) is bound by residues Cys-88 and Cys-95.

This sequence belongs to the PRA-CH family. As to quaternary structure, homodimer. Mg(2+) is required as a cofactor. The cofactor is Zn(2+).

It is found in the cytoplasm. The enzyme catalyses 1-(5-phospho-beta-D-ribosyl)-5'-AMP + H2O = 1-(5-phospho-beta-D-ribosyl)-5-[(5-phospho-beta-D-ribosylamino)methylideneamino]imidazole-4-carboxamide. The protein operates within amino-acid biosynthesis; L-histidine biosynthesis; L-histidine from 5-phospho-alpha-D-ribose 1-diphosphate: step 3/9. In terms of biological role, catalyzes the hydrolysis of the adenine ring of phosphoribosyl-AMP. This chain is Phosphoribosyl-AMP cyclohydrolase, found in Bacillus cereus (strain ATCC 10987 / NRS 248).